Here is a 315-residue protein sequence, read N- to C-terminus: Methionyl-tRNA formyltransferase (315 aa).

A (6S)-5,6,7,8-tetrahydrofolate-binding site is contributed by Ser-113–Pro-116.

It belongs to the Fmt family.

The catalysed reaction is L-methionyl-tRNA(fMet) + (6R)-10-formyltetrahydrofolate = N-formyl-L-methionyl-tRNA(fMet) + (6S)-5,6,7,8-tetrahydrofolate + H(+). Attaches a formyl group to the free amino group of methionyl-tRNA(fMet). The formyl group appears to play a dual role in the initiator identity of N-formylmethionyl-tRNA by promoting its recognition by IF2 and preventing the misappropriation of this tRNA by the elongation apparatus. This Shigella boydii serotype 4 (strain Sb227) protein is Methionyl-tRNA formyltransferase.